The primary structure comprises 176 residues: Peptidoglycan-associated lipoprotein (176 aa).

The N-terminal stretch at 1–21 (MKAGSFYKLGLLVASAVLVAA) is a signal peptide. Cys22 carries N-palmitoyl cysteine lipidation. Cys22 carries S-diacylglycerol cysteine lipidation. Residues 60-176 (YTTQAPHNQL…RVEFIYEATR (117 aa)) form the OmpA-like domain.

Belongs to the Pal lipoprotein family. As to quaternary structure, the Tol-Pal system is composed of five core proteins: the inner membrane proteins TolA, TolQ and TolR, the periplasmic protein TolB and the outer membrane protein Pal. They form a network linking the inner and outer membranes and the peptidoglycan layer.

Its subcellular location is the cell outer membrane. Functionally, part of the Tol-Pal system, which plays a role in outer membrane invagination during cell division and is important for maintaining outer membrane integrity. Very strongly associated with the peptidoglycan. The protein is Peptidoglycan-associated lipoprotein of Legionella pneumophila.